The primary structure comprises 61 residues: MSEKMIKVTQVRSVIGGTKKQKDTIKALGLGRPNHKVEIKDNACTRGQIRVVQHLVKVEEL.

The protein belongs to the universal ribosomal protein uL30 family. In terms of assembly, part of the 50S ribosomal subunit.

This chain is Large ribosomal subunit protein uL30, found in Chlorobaculum tepidum (strain ATCC 49652 / DSM 12025 / NBRC 103806 / TLS) (Chlorobium tepidum).